Reading from the N-terminus, the 2171-residue chain is ATP-binding cassette sub-family C member Sur (2171 aa).

At 1 to 36 (MKQLFNIIHCDHLNGHVRSIYDNLNTDICGIDRVRR) the chain is on the extracellular side. The chain crosses the membrane as a helical span at residues 37–57 (VFTFFSIFLLLFGLMFVCSRY). The Cytoplasmic segment spans residues 58 to 71 (KKCHKTLLTFHNGR). Residues 72–92 (AAISLLLLALNSFDLARIFLP) form a helical membrane-spanning segment. At 93-112 (HQNVRNLNRLFQSSPRDLNY) the chain is on the extracellular side. A helical transmembrane segment spans residues 113–133 (LVVIGSGELWNALFSTLLTLM). Residues 134 to 145 (LMLYHRMVERKK) lie on the Cytoplasmic side of the membrane. A helical membrane pass occupies residues 146-166 (ATVFLYASTAVEALTFALLSN). The Extracellular segment spans residues 167–182 (ELFELVRYEDFLELQT). The chain crosses the membrane as a helical span at residues 183–203 (CLVAMSAMCMVSLAMLDGLTV). Residues 204 to 224 (YKECYHDDYLDDYGKIGYKHS) lie on the Cytoplasmic side of the membrane. Residues 225–245 (MATFYSKSCFWWLTPLLWLGY) form a helical membrane-spanning segment. Topologically, residues 246–299 (KEPLELEDLGQMKLEDSARSHYDHFLYIYTEKKKKSNSSPSLWYCYIKNSWQMF) are extracellular. The helical transmembrane segment at 300–320 (ALGGILKLAGDLFALIGPLAI) threads the bilayer. At 321 to 447 (QKIVEYIEQL…MTEDTRNIME (127 aa)) the chain is on the cytoplasmic side. The ABC transmembrane type-1 1 domain maps to 344-622 (NEVANVLLST…FPITVPIIIA (279 aa)). The segment at 388–434 (DSSDSAGQVQSTSSTSDEKQKNDDSMATPEHVDNPSEPNISHDIGSI) is disordered. Positions 389-402 (SSDSAGQVQSTSST) are enriched in polar residues. Over residues 403–421 (SDEKQKNDDSMATPEHVDN) the composition is skewed to basic and acidic residues. A helical transmembrane segment spans residues 448-468 (FFLIIHYAWAIPFKIAVVIYL). The Extracellular segment spans residues 469–474 (LYMNLG). Residues 475-495 (ISAVIGSIACIVIMTPLQFFI) form a helical membrane-spanning segment. Topologically, residues 496 to 562 (GNAMSKNAEV…KDATFWTLMA (67 aa)) are cytoplasmic. Residues 563–583 (VLTHIATVLITFVTLGVYVWL) form a helical membrane-spanning segment. Over 584 to 600 (HRDQEFDLNASRLFSSL) the chain is Extracellular. Residues 601 to 621 (ALFQQLTVPLLIFPITVPIII) form a helical membrane-spanning segment. Residues 622–1409 (AARVSTRRLE…KYGKISDDIY (788 aa)) lie on the Cytoplasmic side of the membrane. The region spanning 785 to 1014 (VSINDGLFTW…QPRITAEWNA (230 aa)) is the ABC transporter 1 domain. ATP is bound at residue 822–829 (GKNGSGKT). Basic residues predominate over residues 1141–1151 (RRRHTLGRRGS). Disordered regions lie at residues 1141–1177 (RRRHTLGRRGSRNTNSSHRLSGLSTLTATSESSSISG) and 1209–1265 (PRVQ…DHVR). Positions 1160–1176 (LSGLSTLTATSESSSIS) are enriched in low complexity. Over residues 1212–1232 (QSWQPPQHVTHHQPLSRNASS) the composition is skewed to polar residues. Positions 1242 to 1251 (DVKKSEEARR) are enriched in basic and acidic residues. Residues 1410–1430 (LMYIRAAGLPIITIFFITALI) form a helical membrane-spanning segment. The 295-residue stretch at 1421 to 1715 (ITIFFITALI…AVTKSPSELR (295 aa)) folds into the ABC transmembrane type-1 2 domain. The Extracellular segment spans residues 1431–1468 (WQCLRVYTDIWLQQWSNVHGRVASKGHVVLHPSEQDHE). A helical membrane pass occupies residues 1469 to 1489 (VTYYFRMYAAISCVCIIMALV). At 1490–1558 (STPAGQYAGC…QRLLQFTLLC (69 aa)) the chain is on the cytoplasmic side. Residues 1559–1579 (LSAILINVTITPWILVLTLPI) form a helical membrane-spanning segment. The Extracellular segment spans residues 1580–1655 (CGAYYLIQKF…YALLNTSHRW (76 aa)). A helical transmembrane segment spans residues 1656 to 1676 (LGVSLDYLGGCIVFVATVTAL). The Cytoplasmic segment spans residues 1677 to 1718 (TAASVSCRRHYEATTSPSASASPSPFETYAVTKSPSELRPSP). Residues 1719–1739 (SLVGLAINYTLLVPIYLNWVV) traverse the membrane as a helical segment. The Extracellular portion of the chain corresponds to 1740–2171 (KLLADMEMYA…GLLEKGASKW (432 aa)). Residues 1766 to 1778 (ADADADADADVDA) show a composition bias toward acidic residues. Disordered stretches follow at residues 1766-1844 (ADAD…GHEN) and 1866-1902 (NFHHPPATAGDKVEQATTKTSVIKDKQLPPQQDDKDK). Composition is skewed to basic and acidic residues over residues 1793–1804 (EVDRSSQSDAGD) and 1887–1902 (VIKDKQLPPQQDDKDK). Residues 1930–2165 (IHFDNVSLRY…EGSVFRGLLE (236 aa)) form the ABC transporter 2 domain. An ATP-binding site is contributed by 1964–1971 (GRTGSGKS).

It belongs to the ABC transporter superfamily. ABCC family. Conjugate transporter (TC 3.A.1.208) subfamily. In terms of tissue distribution, highly expressed in adult heart. Detected at lower levels in head and abdomen.

The protein resides in the membrane. In terms of biological role, may function as regulatory subunit of ATP-sensitive potassium channels (KATP) and form KATP channels with a member of the ATP-sensitive inward rectifier potassium channel family. May also have channel activity by itself (in vitro). May protect the heart during hypoxia. May protect against heart failure under conditions of tachycardic stress. This chain is ATP-binding cassette sub-family C member Sur (Sur), found in Drosophila melanogaster (Fruit fly).